Here is a 276-residue protein sequence, read N- to C-terminus: Undecaprenyl-diphosphatase (276 aa).

Helical transmembrane passes span 48–68, 92–112, 119–139, 155–175, 196–216, 225–245, and 255–275; these read AANS…AIVF, LSIA…FLFE, LFSV…MLFA, ISYK…WPGF, ADFT…LSLV, DLMP…LFVV, and IKLV…LLIM.

The protein belongs to the UppP family.

Its subcellular location is the cell membrane. The enzyme catalyses di-trans,octa-cis-undecaprenyl diphosphate + H2O = di-trans,octa-cis-undecaprenyl phosphate + phosphate + H(+). In terms of biological role, catalyzes the dephosphorylation of undecaprenyl diphosphate (UPP). Confers resistance to bacitracin. The polypeptide is Undecaprenyl-diphosphatase (Bacillus subtilis (strain 168)).